The following is a 295-amino-acid chain: Ribosomal RNA small subunit methyltransferase A (295 aa).

S-adenosyl-L-methionine is bound by residues N31, L33, G58, E79, D104, and N129.

This sequence belongs to the class I-like SAM-binding methyltransferase superfamily. rRNA adenine N(6)-methyltransferase family. RsmA subfamily.

It is found in the cytoplasm. The catalysed reaction is adenosine(1518)/adenosine(1519) in 16S rRNA + 4 S-adenosyl-L-methionine = N(6)-dimethyladenosine(1518)/N(6)-dimethyladenosine(1519) in 16S rRNA + 4 S-adenosyl-L-homocysteine + 4 H(+). Specifically dimethylates two adjacent adenosines (A1518 and A1519) in the loop of a conserved hairpin near the 3'-end of 16S rRNA in the 30S particle. May play a critical role in biogenesis of 30S subunits. The polypeptide is Ribosomal RNA small subunit methyltransferase A (Leuconostoc citreum (strain KM20)).